The following is a 430-amino-acid chain: tRNA(Ile)-lysidine synthase (430 aa).

27–32 serves as a coordination point for ATP; it reads SGGSDS.

This sequence belongs to the tRNA(Ile)-lysidine synthase family.

The protein resides in the cytoplasm. The catalysed reaction is cytidine(34) in tRNA(Ile2) + L-lysine + ATP = lysidine(34) in tRNA(Ile2) + AMP + diphosphate + H(+). Functionally, ligates lysine onto the cytidine present at position 34 of the AUA codon-specific tRNA(Ile) that contains the anticodon CAU, in an ATP-dependent manner. Cytidine is converted to lysidine, thus changing the amino acid specificity of the tRNA from methionine to isoleucine. The polypeptide is tRNA(Ile)-lysidine synthase (Rickettsia prowazekii (strain Madrid E)).